The chain runs to 225 residues: Ribosome maturation factor RimP (225 aa).

The protein belongs to the RimP family.

The protein localises to the cytoplasm. Functionally, required for maturation of 30S ribosomal subunits. In Rhodospirillum rubrum (strain ATCC 11170 / ATH 1.1.1 / DSM 467 / LMG 4362 / NCIMB 8255 / S1), this protein is Ribosome maturation factor RimP.